Here is a 783-residue protein sequence, read N- to C-terminus: Cation/H(+) antiporter 10 (783 aa).

A run of 12 helical transmembrane segments spans residues V31–I51, I61–F81, I100–V120, V135–F155, A175–L195, A206–I226, A244–I264, M276–F295, I300–A322, I356–A376, L389–V409, and A418–L438.

It belongs to the monovalent cation:proton antiporter 2 (CPA2) transporter (TC 2.A.37) family. CHX (TC 2.A.37.4) subfamily. In terms of tissue distribution, specifically expressed in pollen.

The protein resides in the membrane. In terms of biological role, may operate as a cation/H(+) antiporter. The chain is Cation/H(+) antiporter 10 (CHX10) from Arabidopsis thaliana (Mouse-ear cress).